Reading from the N-terminus, the 133-residue chain is ATP synthase epsilon chain, chloroplastic (133 aa).

It belongs to the ATPase epsilon chain family. F-type ATPases have 2 components, CF(1) - the catalytic core - and CF(0) - the membrane proton channel. CF(1) has five subunits: alpha(3), beta(3), gamma(1), delta(1), epsilon(1). CF(0) has three main subunits: a, b and c.

The protein localises to the plastid. It is found in the chloroplast thylakoid membrane. Its function is as follows. Produces ATP from ADP in the presence of a proton gradient across the membrane. This Phaeodactylum tricornutum (strain CCAP 1055/1) protein is ATP synthase epsilon chain, chloroplastic.